A 210-amino-acid chain; its full sequence is MKVKVYNLLQEIEKEVELNPSVFCLKYRPDIIKLVIDWQLAKRMSGTHCTKTISGVSGTTKKPFKQKGTGNARQGSLRSVQMRGGGISHGPVVRSHEFDVPKKIRKQALKYALSYKLSVNKLIVVDDFNIGSNKTAVLKNLLKKYNYSNYSGFFCIDDQNVDRNFFLASRNLFNLNVVAQIGANPYDIMKHDCVMVTLSAAKSLEMRLAE.

This sequence belongs to the universal ribosomal protein uL4 family. In terms of assembly, part of the 50S ribosomal subunit.

In terms of biological role, one of the primary rRNA binding proteins, this protein initially binds near the 5'-end of the 23S rRNA. It is important during the early stages of 50S assembly. It makes multiple contacts with different domains of the 23S rRNA in the assembled 50S subunit and ribosome. Forms part of the polypeptide exit tunnel. This Orientia tsutsugamushi (strain Boryong) (Rickettsia tsutsugamushi) protein is Large ribosomal subunit protein uL4.